The following is a 261-amino-acid chain: 1-(5-phosphoribosyl)-5-[(5-phosphoribosylamino)methylideneamino] imidazole-4-carboxamide isomerase (261 aa).

The active-site Proton acceptor is the aspartate 8. The active-site Proton donor is the aspartate 130.

This sequence belongs to the HisA/HisF family.

The protein localises to the cytoplasm. The catalysed reaction is 1-(5-phospho-beta-D-ribosyl)-5-[(5-phospho-beta-D-ribosylamino)methylideneamino]imidazole-4-carboxamide = 5-[(5-phospho-1-deoxy-D-ribulos-1-ylimino)methylamino]-1-(5-phospho-beta-D-ribosyl)imidazole-4-carboxamide. It participates in amino-acid biosynthesis; L-histidine biosynthesis; L-histidine from 5-phospho-alpha-D-ribose 1-diphosphate: step 4/9. This is 1-(5-phosphoribosyl)-5-[(5-phosphoribosylamino)methylideneamino] imidazole-4-carboxamide isomerase from Prosthecochloris aestuarii (strain DSM 271 / SK 413).